The primary structure comprises 446 residues: Maltoporin (446 aa).

The first 25 residues, 1 to 25 (MMTTLRKLPLAVAVAAGMMSVQAMA), serve as a signal peptide directing secretion.

This sequence belongs to the porin LamB (TC 1.B.3) family. Homotrimer formed of three 18-stranded antiparallel beta-barrels, containing three independent channels.

The protein resides in the cell outer membrane. It catalyses the reaction beta-maltose(in) = beta-maltose(out). Functionally, involved in the transport of maltose and maltodextrins. This chain is Maltoporin, found in Escherichia fergusonii (strain ATCC 35469 / DSM 13698 / CCUG 18766 / IAM 14443 / JCM 21226 / LMG 7866 / NBRC 102419 / NCTC 12128 / CDC 0568-73).